The chain runs to 244 residues: Protein IN2-1 homolog B (244 aa).

The segment at 1–27 is disordered; the sequence is MAAAAAAPASSEKEVLPPSLTSSSEPP. Residues 32-113 enclose the GST N-terminal domain; that stretch reads GTTRLYVAYH…YIDTNFEGPA (82 aa). Glutathione is bound by residues Val-85 and 97-98; that span reads ES. A GST C-terminal domain is found at 118–241; the sequence is DSEKQQFAEE…FLLEHTKKRL (124 aa).

In Oryza sativa subsp. indica (Rice), this protein is Protein IN2-1 homolog B (GSTZ5).